The sequence spans 450 residues: Probable malate:quinone oxidoreductase (450 aa).

Belongs to the MQO family. It depends on FAD as a cofactor.

The enzyme catalyses (S)-malate + a quinone = a quinol + oxaloacetate. The protein operates within carbohydrate metabolism; tricarboxylic acid cycle; oxaloacetate from (S)-malate (quinone route): step 1/1. The chain is Probable malate:quinone oxidoreductase from Helicobacter acinonychis (strain Sheeba).